A 130-amino-acid chain; its full sequence is Calcium-binding protein KRP1 (130 aa).

The EF-hand domain maps to 72–107; sequence LTDEDVRCMIKEGDFDCDGALNQMEFCVLMFRLSPD. 4 residues coordinate Ca(2+): aspartate 85, aspartate 87, aspartate 89, and glutamate 96.

In terms of biological role, potential calcium sensor that binds calcium in vitro. The chain is Calcium-binding protein KRP1 from Arabidopsis thaliana (Mouse-ear cress).